The sequence spans 157 residues: Probable succinate transporter subunit YjjB (157 aa).

The next 4 helical transmembrane spans lie at 8–28 (LALAQDMILAAIPAVGFAMVF), 50–70 (MILMTSGLNIEWSTFMASMLV), 87–107 (VFTVAAVIPMFPGISAYTAMI), and 129–149 (FLTASSIVGALSIGLSIPGLW).

This sequence belongs to the ThrE exporter (TC 2.A.79) family. As to quaternary structure, the transporter is composed of YjjB and YjjP.

It is found in the cell inner membrane. In terms of biological role, involved in succinate export with YjjP. Both proteins are required for export. The sequence is that of Probable succinate transporter subunit YjjB from Shigella flexneri serotype 5b (strain 8401).